Here is a 469-residue protein sequence, read N- to C-terminus: Putative dipeptidase SAR1836 (469 aa).

Zn(2+) is bound at residue His-84. Residue Asp-86 is part of the active site. A Zn(2+)-binding site is contributed by Asp-115. Catalysis depends on Glu-149, which acts as the Proton acceptor. Glu-150, Asp-173, and His-440 together coordinate Zn(2+).

The protein belongs to the peptidase M20A family. Zn(2+) serves as cofactor.

This chain is Putative dipeptidase SAR1836, found in Staphylococcus aureus (strain MRSA252).